A 258-amino-acid chain; its full sequence is MDWIDPLTTETRLPLIEICVEGIDGLLAAQAAGADRVELCASLVEGGITPSLGTVRAALDQATVPFHVMVRPRGGDFLYSETEYRSMLADVAALRDLGVPGVVFGCLNADGTIDEKRMGELTEAAGPLNVTCHRAFDMTRDPAEALEALIRCKVGRVLTSGQRDSAIEGLPLLADLVRQAGDRIIILGCGGLDLANIAEVRRKTGLAEMHFAALKDVPSTMRYRNPKVGMGGSDLDREYRNTLTDTPLVAATIAAAKA.

It belongs to the CutC family.

The protein resides in the cytoplasm. The polypeptide is PF03932 family protein CutC (Mesorhizobium japonicum (strain LMG 29417 / CECT 9101 / MAFF 303099) (Mesorhizobium loti (strain MAFF 303099))).